Reading from the N-terminus, the 202-residue chain is uncharacterized protein (202 aa).

One can recognise an START domain in the interval 1-202; sequence MRGILRMTVL…KGLRSAAEKR (202 aa).

May play a role in the interaction of the bacterium with animal cells. This is an uncharacterized protein from Pseudomonas aeruginosa (strain ATCC 15692 / DSM 22644 / CIP 104116 / JCM 14847 / LMG 12228 / 1C / PRS 101 / PAO1).